The sequence spans 136 residues: Mini-ribonuclease 3 (136 aa).

D20 is an active-site residue.

It belongs to the MrnC RNase family. As to quaternary structure, homodimer. The cofactor is Mg(2+).

The protein resides in the cytoplasm. Functionally, involved in correct processing of both the 5' and 3' ends of 23S rRNA precursor. Processes 30S rRNA precursor transcript even in absence of ribonuclease 3 (Rnc); Rnc processes 30S rRNA into smaller rRNA precursors. The protein is Mini-ribonuclease 3 of Listeria monocytogenes serovar 1/2a (strain ATCC BAA-679 / EGD-e).